The following is a 484-amino-acid chain: MITIDKILEILKNDHNFREILFHEHYYYNWTQNVTFNALSYDSRQISSDTLFFAKGATFKKEYLDSAITAGLSFYVSEIDYGADIPVILVNDIKKAMSLISMSFYNNPQNKLKLLAFTGTKGKTTAAYFAYHMLKVNHRPAMLSTMNTTLDGKSFFKSHLTTPESLDLFRMMATAVENQMTHLVMEVSSQAYLTKRVYGLTFDVGVFLNISPDHIGPIEHPTFEDYFFHKRLLMENSNAVVVNSQMDHFNIVKEQVEYIPHDFYGDYSENVITESQAFSFHVKGKLENTYDIKLIGKFNQENAIAAGLACLRLGVSIEDIKNGIAQTTVPGRMEVLTQTNGAKIFVDYAHNGDSLKKLLAVVEEHQKGDIILVLGAPGNKGQSRRKDFGDVINQHPNLQVILTADDPNFEDPLVISQEIASHINRPVTIIIDREEAIANASTLTNCKLDAIIIAGKGADAYQIIKGNRDNYSGDLEVAKKYLKR.

Residue Ser43 coordinates UDP-N-acetyl-alpha-D-muramoyl-L-alanyl-D-glutamate. ATP is bound at residue 119–125 (GTKGKTT). Residues 161–162 (TT), Ser188, and Arg196 each bind UDP-N-acetyl-alpha-D-muramoyl-L-alanyl-D-glutamate. Lys230 carries the N6-carboxylysine modification. Positions 405-408 (DDPN) match the L-lysine recognition motif motif.

Belongs to the MurCDEF family. MurE subfamily. Post-translationally, carboxylation is probably crucial for Mg(2+) binding and, consequently, for the gamma-phosphate positioning of ATP.

It localises to the cytoplasm. It carries out the reaction UDP-N-acetyl-alpha-D-muramoyl-L-alanyl-D-glutamate + L-lysine + ATP = UDP-N-acetyl-alpha-D-muramoyl-L-alanyl-gamma-D-glutamyl-L-lysine + ADP + phosphate + H(+). It functions in the pathway cell wall biogenesis; peptidoglycan biosynthesis. In terms of biological role, catalyzes the addition of L-lysine to the nucleotide precursor UDP-N-acetylmuramoyl-L-alanyl-D-glutamate (UMAG) in the biosynthesis of bacterial cell-wall peptidoglycan. The sequence is that of UDP-N-acetylmuramoyl-L-alanyl-D-glutamate--L-lysine ligase from Streptococcus agalactiae serotype III (strain NEM316).